Consider the following 216-residue polypeptide: Probable transaldolase (216 aa).

Lys-84 serves as the catalytic Schiff-base intermediate with substrate.

Belongs to the transaldolase family. Type 3B subfamily.

It localises to the cytoplasm. The enzyme catalyses D-sedoheptulose 7-phosphate + D-glyceraldehyde 3-phosphate = D-erythrose 4-phosphate + beta-D-fructose 6-phosphate. It functions in the pathway carbohydrate degradation; pentose phosphate pathway; D-glyceraldehyde 3-phosphate and beta-D-fructose 6-phosphate from D-ribose 5-phosphate and D-xylulose 5-phosphate (non-oxidative stage): step 2/3. Transaldolase is important for the balance of metabolites in the pentose-phosphate pathway. The polypeptide is Probable transaldolase (Exiguobacterium sp. (strain ATCC BAA-1283 / AT1b)).